A 231-amino-acid chain; its full sequence is Ribonuclease P protein component 3 (231 aa).

The protein belongs to the eukaryotic/archaeal RNase P protein component 3 family. Consists of a catalytic RNA component and at least 4-5 protein subunits.

It localises to the cytoplasm. It carries out the reaction Endonucleolytic cleavage of RNA, removing 5'-extranucleotides from tRNA precursor.. Its function is as follows. Part of ribonuclease P, a protein complex that generates mature tRNA molecules by cleaving their 5'-ends. The chain is Ribonuclease P protein component 3 from Methanococcus vannielii (strain ATCC 35089 / DSM 1224 / JCM 13029 / OCM 148 / SB).